The sequence spans 133 residues: UPF0292 protein TK1411 (133 aa).

The 81-residue stretch at 20–100 (EGALIVEGLR…SVDIETWKEL (81 aa)) folds into the Toprim domain. Residues Glu26, Asp69, and Asp71 each contribute to the Mg(2+) site.

This sequence belongs to the UPF0292 family. Requires Mg(2+) as cofactor.

The protein is UPF0292 protein TK1411 of Thermococcus kodakarensis (strain ATCC BAA-918 / JCM 12380 / KOD1) (Pyrococcus kodakaraensis (strain KOD1)).